A 281-amino-acid polypeptide reads, in one-letter code: Diaminopimelate epimerase (281 aa).

2 residues coordinate substrate: Asn-11 and Asn-65. Cys-74 (proton donor) is an active-site residue. Substrate is bound by residues 75 to 76 (GN), Asn-164, Asn-197, and 215 to 216 (ER). The active-site Proton acceptor is the Cys-224. Position 225-226 (225-226 (GT)) interacts with substrate.

The protein belongs to the diaminopimelate epimerase family. As to quaternary structure, homodimer.

It localises to the cytoplasm. The enzyme catalyses (2S,6S)-2,6-diaminopimelate = meso-2,6-diaminopimelate. It participates in amino-acid biosynthesis; L-lysine biosynthesis via DAP pathway; DL-2,6-diaminopimelate from LL-2,6-diaminopimelate: step 1/1. Its function is as follows. Catalyzes the stereoinversion of LL-2,6-diaminopimelate (L,L-DAP) to meso-diaminopimelate (meso-DAP), a precursor of L-lysine and an essential component of the bacterial peptidoglycan. The chain is Diaminopimelate epimerase from Heliobacterium modesticaldum (strain ATCC 51547 / Ice1).